Consider the following 529-residue polypeptide: Peptide chain release factor 3 (529 aa).

The region spanning 11-280 is the tr-type G domain; sequence AKRRTFAIIS…GLVEWAPAPM (270 aa). GTP-binding positions include 20-27, 88-92, and 142-145; these read SHPDAGKT, DTPGH, and NKLD.

This sequence belongs to the TRAFAC class translation factor GTPase superfamily. Classic translation factor GTPase family. PrfC subfamily.

It is found in the cytoplasm. Its function is as follows. Increases the formation of ribosomal termination complexes and stimulates activities of RF-1 and RF-2. It binds guanine nucleotides and has strong preference for UGA stop codons. It may interact directly with the ribosome. The stimulation of RF-1 and RF-2 is significantly reduced by GTP and GDP, but not by GMP. This chain is Peptide chain release factor 3, found in Shigella sonnei (strain Ss046).